The sequence spans 875 residues: Kelch-like protein 29 (875 aa).

Residues 115 to 126 (WGQTPINQSTPW) are compositionally biased toward polar residues. Disordered stretches follow at residues 115–145 (WGQT…PGTG) and 248–291 (GPTA…DSAH). A compositionally biased stretch (basic and acidic residues) spans 131–140 (PPSKQMRESD). The BTB domain occupies 329–401 (TDLKIVVEGR…VYTGSLVIDS (73 aa)). Kelch repeat units follow at residues 585–635 (VIVL…VSAG), 637–683 (NIYL…VYDG), 684–730 (KIYT…VCGG), 732–778 (IYVF…TLNG), 779–821 (FVFI…VLDG), and 822–870 (KIYA…VIKK).

The polypeptide is Kelch-like protein 29 (KLHL29) (Homo sapiens (Human)).